A 529-amino-acid chain; its full sequence is Bifunctional purine biosynthesis protein PurH (529 aa).

The 148-residue stretch at 2–149 (TDLVPLRRAL…KNHSFVTVLT (148 aa)) folds into the MGS-like domain.

This sequence belongs to the PurH family.

It catalyses the reaction (6R)-10-formyltetrahydrofolate + 5-amino-1-(5-phospho-beta-D-ribosyl)imidazole-4-carboxamide = 5-formamido-1-(5-phospho-D-ribosyl)imidazole-4-carboxamide + (6S)-5,6,7,8-tetrahydrofolate. The catalysed reaction is IMP + H2O = 5-formamido-1-(5-phospho-D-ribosyl)imidazole-4-carboxamide. Its pathway is purine metabolism; IMP biosynthesis via de novo pathway; 5-formamido-1-(5-phospho-D-ribosyl)imidazole-4-carboxamide from 5-amino-1-(5-phospho-D-ribosyl)imidazole-4-carboxamide (10-formyl THF route): step 1/1. The protein operates within purine metabolism; IMP biosynthesis via de novo pathway; IMP from 5-formamido-1-(5-phospho-D-ribosyl)imidazole-4-carboxamide: step 1/1. The chain is Bifunctional purine biosynthesis protein PurH from Dinoroseobacter shibae (strain DSM 16493 / NCIMB 14021 / DFL 12).